The following is a 76-amino-acid chain: MARFFRRRKFCRFTAEDVKEIDYKDLNTLKAYVSETGKIVPSRITGTKARYQRQLATAIKRARFLALLAYTDSHGR.

The protein belongs to the bacterial ribosomal protein bS18 family. In terms of assembly, part of the 30S ribosomal subunit. Forms a tight heterodimer with protein bS6.

Binds as a heterodimer with protein bS6 to the central domain of the 16S rRNA, where it helps stabilize the platform of the 30S subunit. The protein is Small ribosomal subunit protein bS18 of Pseudomonas fluorescens (strain ATCC BAA-477 / NRRL B-23932 / Pf-5).